Reading from the N-terminus, the 940-residue chain is UvrABC system protein A (940 aa).

31–38 (GLSGSGKS) provides a ligand contact to ATP. The C4-type zinc-finger motif lies at 252-279 (CPHCGYSMQELEPRLFSFNNPAGACGTC). 2 consecutive ABC transporter domains span residues 309 to 586 (WDQK…PDSL) and 606 to 936 (RDKN…RFLK). 639–646 (GVSGSGKS) is an ATP binding site. The C4-type zinc finger occupies 739–765 (CEACQGDGVIKVEMHFLPDVYVPCDVC).

Belongs to the ABC transporter superfamily. UvrA family. As to quaternary structure, forms a heterotetramer with UvrB during the search for lesions.

The protein resides in the cytoplasm. Its function is as follows. The UvrABC repair system catalyzes the recognition and processing of DNA lesions. UvrA is an ATPase and a DNA-binding protein. A damage recognition complex composed of 2 UvrA and 2 UvrB subunits scans DNA for abnormalities. When the presence of a lesion has been verified by UvrB, the UvrA molecules dissociate. The chain is UvrABC system protein A from Vibrio vulnificus (strain CMCP6).